A 212-amino-acid chain; its full sequence is Uracil phosphoribosyltransferase (212 aa).

Residues R78, R103, and 130–138 (DPMLATGGS) contribute to the 5-phospho-alpha-D-ribose 1-diphosphate site. Uracil contacts are provided by residues I193 and 198 to 200 (GDA). D199 is a binding site for 5-phospho-alpha-D-ribose 1-diphosphate.

It belongs to the UPRTase family. Mg(2+) serves as cofactor.

The enzyme catalyses UMP + diphosphate = 5-phospho-alpha-D-ribose 1-diphosphate + uracil. It participates in pyrimidine metabolism; UMP biosynthesis via salvage pathway; UMP from uracil: step 1/1. Allosterically activated by GTP. Its function is as follows. Catalyzes the conversion of uracil and 5-phospho-alpha-D-ribose 1-diphosphate (PRPP) to UMP and diphosphate. This Pseudomonas putida (strain ATCC 700007 / DSM 6899 / JCM 31910 / BCRC 17059 / LMG 24140 / F1) protein is Uracil phosphoribosyltransferase.